We begin with the raw amino-acid sequence, 152 residues long: Lipoprotein signal peptidase (152 aa).

Helical transmembrane passes span 55-75 (NKMW…VFYM) and 85-105 (LGIS…DRVF). Residues Asp-111 and Asp-129 contribute to the active site. A helical membrane pass occupies residues 124-144 (VFNIADSALCIGVVLIIIQTL).

Belongs to the peptidase A8 family.

Its subcellular location is the cell membrane. It catalyses the reaction Release of signal peptides from bacterial membrane prolipoproteins. Hydrolyzes -Xaa-Yaa-Zaa-|-(S,diacylglyceryl)Cys-, in which Xaa is hydrophobic (preferably Leu), and Yaa (Ala or Ser) and Zaa (Gly or Ala) have small, neutral side chains.. It participates in protein modification; lipoprotein biosynthesis (signal peptide cleavage). This protein specifically catalyzes the removal of signal peptides from prolipoproteins. The protein is Lipoprotein signal peptidase of Bacillus cereus (strain ZK / E33L).